Here is a 604-residue protein sequence, read N- to C-terminus: Prostaglandin G/H synthase 2 (604 aa).

A signal peptide spans 1-17 (MLARALLLCVALALGHA). The EGF-like domain occupies 18–55 (ANPCCSNPCQNRGVCMSVGFDQYQCDCTRTGFYGENCS). 4 disulfides stabilise this stretch: C21-C32, C22-C145, C26-C42, and C44-C54. N-linked (GlcNAc...) asparagine glycosylation occurs at N53. R106 provides a ligand contact to substrate. N130 is a glycosylation site (N-linked (GlcNAc...) asparagine). H193 (proton acceptor) is an active-site residue. A substrate-binding site is contributed by Y341. Residue Y371 is the For cyclooxygenase activity of the active site. Residue H374 coordinates heme b. N396 carries an N-linked (GlcNAc...) asparagine glycan. The residue at position 526 (C526) is an S-nitrosocysteine. C555 and C561 form a disulfide bridge. An N-linked (GlcNAc...) asparagine glycan is attached at N580.

The protein belongs to the prostaglandin G/H synthase family. As to quaternary structure, homodimer. The cofactor is heme b. S-nitrosylation by NOS2 (iNOS) activates enzyme activity. S-nitrosylation may take place on different Cys residues in addition to Cys-526.

The protein resides in the microsome membrane. It localises to the endoplasmic reticulum membrane. Its subcellular location is the nucleus inner membrane. The protein localises to the nucleus outer membrane. The catalysed reaction is (5Z,8Z,11Z,14Z)-eicosatetraenoate + AH2 + 2 O2 = prostaglandin H2 + A + H2O. The enzyme catalyses (5Z,8Z,11Z,14Z)-eicosatetraenoate + 2 O2 = prostaglandin G2. It catalyses the reaction prostaglandin G2 + AH2 = prostaglandin H2 + A + H2O. It carries out the reaction (5Z,8Z,11Z,14Z,17Z)-eicosapentaenoate + 2 O2 = prostaglandin G3. The catalysed reaction is prostaglandin G3 + AH2 = prostaglandin H3 + A + H2O. The enzyme catalyses (8Z,11Z,14Z)-eicosatrienoate + 2 O2 = prostaglandin G1. It catalyses the reaction prostaglandin G1 + AH2 = prostaglandin H1 + A + H2O. It carries out the reaction 2-(5Z,8Z,11Z,14Z)-eicosatetraenoyl-sn-glycero-3-phosphoethanolamine + 2 O2 = 2-(prostaglandin G2)-sn-glycero-3-phosphoethanolamine. The catalysed reaction is 2-(prostaglandin G2)-sn-glycero-3-phosphoethanolamine + AH2 = 2-(prostaglandin H2)-sn-glycero-3-phosphoethanolamine + A + H2O. The enzyme catalyses 2-(5Z,8Z,11Z,14Z)-eicosatetraenoyl-sn-glycero-3-phosphocholine + 2 O2 = 2-(prostaglandin G2)-sn-glycero-3-phosphocholine. It catalyses the reaction 2-(prostaglandin G2)-sn-glycero-3-phosphocholine + AH2 = 2-(prostaglandin H2)-sn-glycero-3-phosphocholine + A + H2O. It carries out the reaction (15S)-hydroperoxy-(5Z,8Z,11Z,13E)-eicosatetraenoate + AH2 = (15S)-hydroxy-(5Z,8Z,11Z,13E)-eicosatetraenoate + A + H2O. The catalysed reaction is 2-(5Z,8Z,11Z,14Z)-eicosatetraenoyl-sn-glycero-3-phosphocholine + AH2 + O2 = 2-[(15S)-hydroxy-(5Z,8Z,11Z,13E)-eicosatetraenoyl]-sn-glycero-3-phosphocholine + A + H2O. The enzyme catalyses 2-(5Z,8Z,11Z,14Z)-eicosatetraenoyl-sn-glycero-3-phosphocholine + AH2 + O2 = 2-[(15R)-hydroxy-(5Z,8Z,11Z,13E)-eicosatetraenoyl]-sn-glycero-3-phosphocholine + A + H2O. It catalyses the reaction 2-(5Z,8Z,11Z,14Z)-eicosatetraenoyl-sn-glycero-3-phosphocholine + AH2 + O2 = 2-[(11R)-hydroxy-(5Z,8Z,12E,14Z)-eicosatetraenoyl]-sn-glycero-3-phosphocholine + A + H2O. It carries out the reaction (9Z,12Z)-octadecadienoate + AH2 + O2 = 9-hydroxy-(10E,12Z)-octadecadienoate + A + H2O. The catalysed reaction is (9Z,12Z)-octadecadienoate + AH2 + O2 = 13-hydroxy-(9Z,11E)-octadecadienoate + A + H2O. The enzyme catalyses (5Z,8Z,11Z,14Z)-eicosatetraenoate + AH2 + O2 = (15R)-hydroxy-(5Z,8Z,11Z,13E)-eicosatetraenoate + A + H2O. It catalyses the reaction (5Z,8Z,11Z,14Z)-eicosatetraenoate + AH2 + O2 = (11R)-hydroxy-(5Z,8Z,12E,14Z)-eicosatetraenoate + A + H2O. It carries out the reaction (5Z,8Z,11Z,14Z,17Z)-eicosapentaenoate + AH2 + O2 = (11R)-hydroxy-(5Z,8Z,12E,14Z,17Z)-eicosapentaenoate + A + H2O. The catalysed reaction is (5Z,8Z,11Z,14Z,17Z)-eicosapentaenoate + AH2 + O2 = (18S)-hydroxy-(5Z,8Z,11Z,14Z,16E)-eicosapentaenoate + A + H2O. The enzyme catalyses (5Z,8Z,11Z,14Z,17Z)-eicosapentaenoate + AH2 + O2 = (18R)-hydroxy-(5Z,8Z,11Z,14Z,16E)-eicosapentaenoate + A + H2O. It catalyses the reaction (5Z,8Z,11Z,14Z,17Z)-eicosapentaenoate + AH2 + O2 = (15R)-hydroxy-(5Z,8Z,11Z,13E,17Z)-eicosapentaenoate + A + H2O. It carries out the reaction (5Z,8Z,11Z,14Z,17Z)-eicosapentaenoate + AH2 + O2 = (15S)-hydroxy-(5Z,8Z,11Z,13E,17Z)-eicosapentaenoate + A + H2O. The catalysed reaction is (7Z,10Z,13Z,16Z,19Z)-docosapentaenoate + AH2 + O2 = 13R-hydroxy-(7Z,10Z,14E,16Z,19Z)-docosapentaenoate + A + H2O. The enzyme catalyses (4Z,7Z,10Z,13Z,16Z,19Z)-docosahexaenoate + AH2 + O2 = 13-hydroxy-(4Z,7Z,10Z,14E,16Z,19Z)-docosahexaenoate + A + H2O. It catalyses the reaction (5S)-hydroxy-(6E,8Z,11Z,14Z)-eicosatetraenoate + AH2 + O2 = (5S,15R)-dihydroxy-(6E,8Z,11Z,13E)-eicosatetraenoate + A + H2O. It carries out the reaction (4Z,7Z,10Z,13Z,16Z,19Z)-docosahexaenoate + AH2 + O2 = 17R-hydroxy-(4Z,7Z,10Z,13Z,15E,19Z)-docosahexaenoate + A + H2O. The catalysed reaction is (5S)-hydroxy-(6E,8Z,11Z,14Z)-eicosatetraenoate + AH2 + O2 = (5S,15S)-dihydroxy-(6E,8Z,11Z,13E)-eicosatetraenoate + A + H2O. The enzyme catalyses (5S)-hydroxy-(6E,8Z,11Z,14Z)-eicosatetraenoate + AH2 + O2 = (5S,11R)-dihydroxy-(6E,8Z,12E,14Z)-eicosatetraenoate + A + H2O. It catalyses the reaction 2-(5Z,8Z,11Z,14Z-eicosatetraenoyl)-glycerol + 2 O2 = 2-glyceryl-prostaglandin G2. It carries out the reaction 2-glyceryl-prostaglandin G2 + AH2 = 2-glyceryl-prostaglandin H2 + A + H2O. The catalysed reaction is (5Z,8Z,11Z,14Z)-eicosatetraenoate + O2 = (15R)-hydroperoxy-(5Z,8Z,11Z,13E)-eicosatetraenoate. The enzyme catalyses (5Z,8Z,11Z,14Z)-eicosatetraenoate + O2 = 11R-hydroperoxy-(5Z,8Z,12E,14Z)-eicosatetraenoate. It catalyses the reaction (9Z,12Z)-octadecadienoate + AH2 + O2 = (9R)-hydroxy-(10E,12Z)-octadecadienoate + A + H2O. It carries out the reaction (9Z,12Z)-octadecadienoate + AH2 + O2 = (9S)-hydroxy-(10E,12Z)-octadecadienoate + A + H2O. The catalysed reaction is (9Z,12Z)-octadecadienoate + AH2 + O2 = (13S)-hydroxy-(9Z,11E)-octadecadienoate + A + H2O. The enzyme catalyses (9Z,12Z)-octadecadienoate + AH2 + O2 = (13R)-hydroxy-(9Z,11E)-octadecadienoate + A + H2O. The protein operates within lipid metabolism; prostaglandin biosynthesis. Dual cyclooxygenase and peroxidase in the biosynthesis pathway of prostanoids, a class of C20 oxylipins mainly derived from arachidonate ((5Z,8Z,11Z,14Z)-eicosatetraenoate, AA, C20:4(n-6)), with a particular role in the inflammatory response. The cyclooxygenase activity oxygenates AA to the hydroperoxy endoperoxide prostaglandin G2 (PGG2), and the peroxidase activity reduces PGG2 to the hydroxy endoperoxide prostaglandin H2 (PGH2), the precursor of all 2-series prostaglandins and thromboxanes. This complex transformation is initiated by abstraction of hydrogen at carbon 13 (with S-stereochemistry), followed by insertion of molecular O2 to form the endoperoxide bridge between carbon 9 and 11 that defines prostaglandins. The insertion of a second molecule of O2 (bis-oxygenase activity) yields a hydroperoxy group in PGG2 that is then reduced to PGH2 by two electrons. Similarly catalyzes successive cyclooxygenation and peroxidation of dihomo-gamma-linoleate (DGLA, C20:3(n-6)) and eicosapentaenoate (EPA, C20:5(n-3)) to corresponding PGH1 and PGH3, the precursors of 1- and 3-series prostaglandins. In an alternative pathway of prostanoid biosynthesis, converts 2-arachidonoyl lysophopholipids to prostanoid lysophopholipids, which are then hydrolyzed by intracellular phospholipases to release free prostanoids. Metabolizes 2-arachidonoyl glycerol yielding the glyceryl ester of PGH2, a process that can contribute to pain response. Generates lipid mediators from n-3 and n-6 polyunsaturated fatty acids (PUFAs) via a lipoxygenase-type mechanism. Oxygenates PUFAs to hydroperoxy compounds and then reduces them to corresponding alcohols. Plays a role in the generation of resolution phase interaction products (resolvins) during both sterile and infectious inflammation. Metabolizes docosahexaenoate (DHA, C22:6(n-3)) to 17R-HDHA, a precursor of the D-series resolvins (RvDs). As a component of the biosynthetic pathway of E-series resolvins (RvEs), converts eicosapentaenoate (EPA, C20:5(n-3)) primarily to 18S-HEPE that is further metabolized by ALOX5 and LTA4H to generate 18S-RvE1 and 18S-RvE2. In vascular endothelial cells, converts docosapentaenoate (DPA, C22:5(n-3)) to 13R-HDPA, a precursor for 13-series resolvins (RvTs) shown to activate macrophage phagocytosis during bacterial infection. In activated leukocytes, contributes to oxygenation of hydroxyeicosatetraenoates (HETE) to diHETES (5,15-diHETE and 5,11-diHETE). Can also use linoleate (LA, (9Z,12Z)-octadecadienoate, C18:2(n-6)) as substrate and produce hydroxyoctadecadienoates (HODEs) in a regio- and stereospecific manner, being (9R)-HODE ((9R)-hydroxy-(10E,12Z)-octadecadienoate) and (13S)-HODE ((13S)-hydroxy-(9Z,11E)-octadecadienoate) its major products. During neuroinflammation, plays a role in neuronal secretion of specialized preresolving mediators (SPMs) 15R-lipoxin A4 that regulates phagocytic microglia. The protein is Prostaglandin G/H synthase 2 (PTGS2) of Equus caballus (Horse).